Consider the following 130-residue polypeptide: Small ribosomal subunit protein uS11 (130 aa).

This sequence belongs to the universal ribosomal protein uS11 family. In terms of assembly, part of the 30S ribosomal subunit. Interacts with proteins S7 and S18. Binds to IF-3.

Functionally, located on the platform of the 30S subunit, it bridges several disparate RNA helices of the 16S rRNA. Forms part of the Shine-Dalgarno cleft in the 70S ribosome. This Acidiphilium cryptum (strain JF-5) protein is Small ribosomal subunit protein uS11.